We begin with the raw amino-acid sequence, 647 residues long: Zinc finger protein 567 (647 aa).

The 46-residue stretch at 32 to 77 folds into the KRAB domain; that stretch reads MDVMLENYCHLISVGCHMTKPDVILKLERGEEPWTSFKGHTCLEEN. Glycyl lysine isopeptide (Lys-Gly) (interchain with G-Cter in SUMO2) cross-links involve residues lysine 173, lysine 202, and lysine 217. The C2H2-type 1; degenerate zinc finger occupies 210 to 232; sequence FEYNDCEKAFLKRGGPVTHSRTY. 7 consecutive C2H2-type zinc fingers follow at residues 253 to 275, 281 to 303, 309 to 331, 337 to 359, 365 to 387, 393 to 415, and 421 to 443; these read HTCT…QGIH, YQCH…QRTH, FVCN…QRTH, YECP…QRTH, YECS…QRIH, YICK…QRTH, and YICN…EKTH. Residue lysine 447 forms a Glycyl lysine isopeptide (Lys-Gly) (interchain with G-Cter in SUMO2) linkage. 7 C2H2-type zinc fingers span residues 449–471, 477–499, 505–527, 533–555, 561–583, 589–611, and 617–639; these read YICN…QRTH, YECP…HRTH, YECN…QRIH, YICN…QKIH, YECP…QRTH, and YKCS…QRTH.

The protein belongs to the krueppel C2H2-type zinc-finger protein family.

It localises to the nucleus. Functionally, may be involved in transcriptional regulation. This is Zinc finger protein 567 (ZNF567) from Bos taurus (Bovine).